The primary structure comprises 212 residues: Pyridoxine/pyridoxamine 5'-phosphate oxidase (212 aa).

Residues 8–11 and Lys66 each bind substrate; that span reads RREY. FMN contacts are provided by residues 61–66, 76–77, Arg82, Lys83, and Gln105; these read RIVLLK and FT. Positions 123, 127, and 131 each coordinate substrate. FMN contacts are provided by residues 140 to 141 and Trp185; that span reads QS. 191–193 provides a ligand contact to substrate; sequence RLH. FMN is bound at residue Arg195.

It belongs to the pyridoxamine 5'-phosphate oxidase family. Homodimer. The cofactor is FMN.

It catalyses the reaction pyridoxamine 5'-phosphate + O2 + H2O = pyridoxal 5'-phosphate + H2O2 + NH4(+). The catalysed reaction is pyridoxine 5'-phosphate + O2 = pyridoxal 5'-phosphate + H2O2. It participates in cofactor metabolism; pyridoxal 5'-phosphate salvage; pyridoxal 5'-phosphate from pyridoxamine 5'-phosphate: step 1/1. The protein operates within cofactor metabolism; pyridoxal 5'-phosphate salvage; pyridoxal 5'-phosphate from pyridoxine 5'-phosphate: step 1/1. Catalyzes the oxidation of either pyridoxine 5'-phosphate (PNP) or pyridoxamine 5'-phosphate (PMP) into pyridoxal 5'-phosphate (PLP). The sequence is that of Pyridoxine/pyridoxamine 5'-phosphate oxidase from Shewanella baltica (strain OS155 / ATCC BAA-1091).